A 141-amino-acid chain; its full sequence is Nucleoside diphosphate kinase (141 aa).

ATP contacts are provided by Lys11, Phe59, Arg87, Thr93, Arg104, and Asn114. The active-site Pros-phosphohistidine intermediate is His117.

This sequence belongs to the NDK family. In terms of assembly, homotetramer. Mg(2+) serves as cofactor.

The protein localises to the cytoplasm. It catalyses the reaction a 2'-deoxyribonucleoside 5'-diphosphate + ATP = a 2'-deoxyribonucleoside 5'-triphosphate + ADP. The enzyme catalyses a ribonucleoside 5'-diphosphate + ATP = a ribonucleoside 5'-triphosphate + ADP. In terms of biological role, major role in the synthesis of nucleoside triphosphates other than ATP. The ATP gamma phosphate is transferred to the NDP beta phosphate via a ping-pong mechanism, using a phosphorylated active-site intermediate. The sequence is that of Nucleoside diphosphate kinase from Cupriavidus necator (strain ATCC 17699 / DSM 428 / KCTC 22496 / NCIMB 10442 / H16 / Stanier 337) (Ralstonia eutropha).